A 544-amino-acid polypeptide reads, in one-letter code: Chaperonin GroEL (544 aa).

ATP contacts are provided by residues 30 to 33, 87 to 91, glycine 414, 478 to 480, and aspartate 494; these read TLGP, DGTTT, and NAL.

The protein belongs to the chaperonin (HSP60) family. Forms a cylinder of 14 subunits composed of two heptameric rings stacked back-to-back. Interacts with the co-chaperonin GroES.

The protein localises to the cytoplasm. It catalyses the reaction ATP + H2O + a folded polypeptide = ADP + phosphate + an unfolded polypeptide.. Functionally, together with its co-chaperonin GroES, plays an essential role in assisting protein folding. The GroEL-GroES system forms a nano-cage that allows encapsulation of the non-native substrate proteins and provides a physical environment optimized to promote and accelerate protein folding. The protein is Chaperonin GroEL of Pelotomaculum thermopropionicum (strain DSM 13744 / JCM 10971 / SI).